Reading from the N-terminus, the 375-residue chain is Glutaconyl-CoA decarboxylase subunit beta (375 aa).

11 helical membrane passes run 16 to 39 (GFVAFTWGNAVMMLVGCILLYLAI), 46 to 65 (LLLSPIAFGCILANVPRTGF), 74 to 96 (LILGGIKYEIFPPLIFMGVGAMT), 107 to 130 (TLLLGAAAQIGVFVALLGAMLLGF), 137 to 153 (AIGIIGGADGPTSIYLA), 160 to 178 (LLGAIAVAAYSYMSLVPLI), 208 to 232 (VVFPIVTTIFISLLLPSVCSLIGML), 254 to 271 (ALMNSVTIMLATGTGLTM), 284 to 302 (IICLGLVAFIGGTAGGVLF), 316 to 332 (PLIGSAGVSAVPMAARV), and 345 to 369 (FLLMHAMGPNVAGVIGTAVAAGTML).

The protein belongs to the GcdB/MmdB/OadB family. Heterooctamer consisting of two alpha, two beta, two gamma and two delta subunits. In terms of processing, the N-terminus is blocked.

Its subcellular location is the cell membrane. It catalyses the reaction (2E)-glutaconyl-CoA + Na(+)(in) + H(+) = (2E)-butenoyl-CoA + Na(+)(out) + CO2. It participates in amino-acid degradation; L-glutamate degradation via hydroxyglutarate pathway; crotonoyl-CoA from L-glutamate: step 5/5. Its function is as follows. Tunnel subunit of the primary sodium pump glutaconyl-CoA decarboxylase (GCD). The protein is Glutaconyl-CoA decarboxylase subunit beta (gcdB) of Acidaminococcus fermentans (strain ATCC 25085 / DSM 20731 / CCUG 9996 / CIP 106432 / VR4).